Consider the following 326-residue polypeptide: Metallophosphoesterase domain-containing protein 1 (326 aa).

Belongs to the UPF0046 family.

May have metallophosphoesterase activity (in vitro). The protein is Metallophosphoesterase domain-containing protein 1 (Mpped1) of Mus musculus (Mouse).